Reading from the N-terminus, the 88-residue chain is Large ribosomal subunit protein bL27 (88 aa).

The segment at 1–21 (MAHKKGQGSTQNNRDSAGRRL) is disordered.

The protein belongs to the bacterial ribosomal protein bL27 family.

This Helicobacter pylori (strain J99 / ATCC 700824) (Campylobacter pylori J99) protein is Large ribosomal subunit protein bL27.